A 106-amino-acid polypeptide reads, in one-letter code: Putative toxin Rv3098A/RVBD_3098A (106 aa).

This sequence belongs to the PemK/MazF family. In terms of assembly, forms a complex with cognate antitoxin Rv3098B/RVBD_3098B.

Putative toxic component of a possible type II toxin-antitoxin (TA) system. Its toxic effect may be neutralized by cognate antitoxin Rv3098B/RVBD_3098B. The chain is Putative toxin Rv3098A/RVBD_3098A from Mycobacterium tuberculosis (strain ATCC 25618 / H37Rv).